Here is a 1164-residue protein sequence, read N- to C-terminus: DNA-directed RNA polymerase 132 kDa polypeptide (1164 aa).

This sequence belongs to the RNA polymerase beta chain family. The DNA-dependent RNA polymerase used for intermediate and late genes expression consists of eight subunits (147) kDa, (133) kDa, (35) kDa, (30) kDa, (22) kDa, (19) kDa, (18) kDa and (7) kDa totalling more than 500 kDa in mass. The same holoenzyme, with the addition of the transcription-specificity factor RAP94, is used for early gene expression.

Its subcellular location is the virion. The catalysed reaction is RNA(n) + a ribonucleoside 5'-triphosphate = RNA(n+1) + diphosphate. In terms of biological role, part of the DNA-dependent RNA polymerase which catalyzes the transcription of viral DNA into RNA using the four ribonucleoside triphosphates as substrates. Responsible for the transcription of early, intermediate and late genes. DNA-dependent RNA polymerase associates with the early transcription factor (ETF), itself composed of D6 and A7, thereby allowing the early genes transcription. Late transcription, and probably also intermediate transcription, require newly synthesized RNA polymerase. The chain is DNA-directed RNA polymerase 132 kDa polypeptide (RPO132) from Oryctolagus cuniculus (Rabbit).